The sequence spans 318 residues: Basic leucine zipper (bZIP) transcription factor atfB (318 aa).

Disordered stretches follow at residues Leu79 to Gln100 and Phe114 to Glu164. Residues Arg160–Lys199 are basic motif. The bZIP domain occupies Arg160–His223. The segment at Leu202 to Leu216 is leucine-zipper. Residues Thr247 to Tyr304 are disordered.

Belongs to the bZIP family. ATF subfamily.

The protein localises to the nucleus. Transcription factor that acts as a key player in the regulatory circuit that integrates secondary metabolism and cellular response to oxidative stress. Regulates the genes involved in development, stress response, and secondary metabolism through direct binding to their promoters. Particularly involved in the resistance to oxidative stress in asexual conidiospores. Binds aflatoxin gene promoters carrying the cAMP-response element (CRE1) under aflatoxin-inducing conditions. The protein is Basic leucine zipper (bZIP) transcription factor atfB of Aspergillus parasiticus (strain ATCC 56775 / NRRL 5862 / SRRC 143 / SU-1).